The sequence spans 106 residues: UPF0122 protein Exig_1902 (106 aa).

It belongs to the UPF0122 family.

In terms of biological role, might take part in the signal recognition particle (SRP) pathway. This is inferred from the conservation of its genetic proximity to ftsY/ffh. May be a regulatory protein. The chain is UPF0122 protein Exig_1902 from Exiguobacterium sibiricum (strain DSM 17290 / CCUG 55495 / CIP 109462 / JCM 13490 / 255-15).